The chain runs to 394 residues: Phosphoglycerate kinase (394 aa).

Residues 21–23, Arg-36, 59–62, Arg-118, and Arg-151 contribute to the substrate site; these read DFN and HLGR. Ser-183 carries the phosphoserine modification. 2 residues coordinate ATP: Lys-201 and Gly-292. Thr-299 is modified (phosphothreonine). Residues Glu-323 and 350–353 each bind ATP; that span reads GGDS.

This sequence belongs to the phosphoglycerate kinase family. As to quaternary structure, monomer.

It is found in the cytoplasm. The enzyme catalyses (2R)-3-phosphoglycerate + ATP = (2R)-3-phospho-glyceroyl phosphate + ADP. The protein operates within carbohydrate degradation; glycolysis; pyruvate from D-glyceraldehyde 3-phosphate: step 2/5. The sequence is that of Phosphoglycerate kinase from Bacillus cereus (strain B4264).